A 404-amino-acid polypeptide reads, in one-letter code: MDYSEIMVRHGELSTKGKNRMRFINKLKNNIQDVLAPFPAITVRSDRDRTHVSLNGTDYQPIVEALKLVFGVQALSPVYKLEKSVPLLVTAVQDIMTSLYRDGLTFKIATKRSDHAFELDSRELNSLLGGAVFEVLPNIQAQMKHPDVTLKVEIRDEAAYISYEEIKGAGGLPVGTSGKGMLMLSGGIDSPVAGYLALKRGLDIEVVHFASPPYTSPGALAKAQDLTRRLTRFGGNIQFIEVPFTEIQEEIKNKAPEAYLMTLTRRFMMRITDAIREQRKGLVIVNGESLGQVASQTLESMQAINAVTSTPIIRPVVTMDKLEIIEMAQAIDTFDISIQPFEDCCTIFAPDRPKTNPKLGNAEKYEECFDIDGLVQRAVSGIVVTEITPEIVNDEVENLIDALL.

The region spanning 60-165 (QPIVEALKLV…DEAAYISYEE (106 aa)) is the THUMP domain. Residues 183-184 (ML), 208-209 (HF), Arg265, Gly287, and Gln296 each bind ATP.

This sequence belongs to the ThiI family.

The protein resides in the cytoplasm. It catalyses the reaction [ThiI sulfur-carrier protein]-S-sulfanyl-L-cysteine + a uridine in tRNA + 2 reduced [2Fe-2S]-[ferredoxin] + ATP + H(+) = [ThiI sulfur-carrier protein]-L-cysteine + a 4-thiouridine in tRNA + 2 oxidized [2Fe-2S]-[ferredoxin] + AMP + diphosphate. The enzyme catalyses [ThiS sulfur-carrier protein]-C-terminal Gly-Gly-AMP + S-sulfanyl-L-cysteinyl-[cysteine desulfurase] + AH2 = [ThiS sulfur-carrier protein]-C-terminal-Gly-aminoethanethioate + L-cysteinyl-[cysteine desulfurase] + A + AMP + 2 H(+). Its pathway is cofactor biosynthesis; thiamine diphosphate biosynthesis. Its function is as follows. Catalyzes the ATP-dependent transfer of a sulfur to tRNA to produce 4-thiouridine in position 8 of tRNAs, which functions as a near-UV photosensor. Also catalyzes the transfer of sulfur to the sulfur carrier protein ThiS, forming ThiS-thiocarboxylate. This is a step in the synthesis of thiazole, in the thiamine biosynthesis pathway. The sulfur is donated as persulfide by IscS. This chain is Probable tRNA sulfurtransferase, found in Streptococcus pyogenes serotype M1.